A 506-amino-acid chain; its full sequence is Maturase K (506 aa).

It belongs to the intron maturase 2 family. MatK subfamily.

Its subcellular location is the plastid. It localises to the chloroplast. Functionally, usually encoded in the trnK tRNA gene intron. Probably assists in splicing its own and other chloroplast group II introns. The sequence is that of Maturase K from Medicago truncatula (Barrel medic).